Here is a 62-residue protein sequence, read N- to C-terminus: Disintegrin atropoimin (62 aa).

The 62-residue stretch at 1–62 (EAGEECDCGT…ADCPRNGLYG (62 aa)) folds into the Disintegrin domain. 5 cysteine pairs are disulfide-bonded: C6–C21, C8–C16, C15–C38, C29–C35, and C34–C48. A Cell attachment site motif is present at residues 41 to 42 (GD).

Belongs to the venom metalloproteinase (M12B) family. P-II subfamily. P-IIa sub-subfamily. In terms of assembly, monomer. In terms of tissue distribution, expressed by the venom gland.

The protein resides in the secreted. Functionally, inhibits ADP- (IC(50)=63 nM) and collagen-induced (IC(50)=53 nM) aggregation of human platelets. In vitro, inhibits adhesion of endothelial cells to vitronectin, type-I collagen and, to a lower degree, fibronectin and laminin. The polypeptide is Disintegrin atropoimin (Metlapilcoatlus mexicanus (Central American jumping pitviper)).